A 173-amino-acid chain; its full sequence is Crossover junction endodeoxyribonuclease RuvC (173 aa).

Catalysis depends on residues aspartate 8, glutamate 67, and aspartate 139. Mg(2+) is bound by residues aspartate 8, glutamate 67, and aspartate 139.

It belongs to the RuvC family. In terms of assembly, homodimer which binds Holliday junction (HJ) DNA. The HJ becomes 2-fold symmetrical on binding to RuvC with unstacked arms; it has a different conformation from HJ DNA in complex with RuvA. In the full resolvosome a probable DNA-RuvA(4)-RuvB(12)-RuvC(2) complex forms which resolves the HJ. It depends on Mg(2+) as a cofactor.

Its subcellular location is the cytoplasm. The enzyme catalyses Endonucleolytic cleavage at a junction such as a reciprocal single-stranded crossover between two homologous DNA duplexes (Holliday junction).. Its function is as follows. The RuvA-RuvB-RuvC complex processes Holliday junction (HJ) DNA during genetic recombination and DNA repair. Endonuclease that resolves HJ intermediates. Cleaves cruciform DNA by making single-stranded nicks across the HJ at symmetrical positions within the homologous arms, yielding a 5'-phosphate and a 3'-hydroxyl group; requires a central core of homology in the junction. The consensus cleavage sequence is 5'-(A/T)TT(C/G)-3'. Cleavage occurs on the 3'-side of the TT dinucleotide at the point of strand exchange. HJ branch migration catalyzed by RuvA-RuvB allows RuvC to scan DNA until it finds its consensus sequence, where it cleaves and resolves the cruciform DNA. This Salmonella choleraesuis (strain SC-B67) protein is Crossover junction endodeoxyribonuclease RuvC.